The sequence spans 199 residues: Photosystem I reaction center subunit XI (199 aa).

2 helical membrane passes run 108 to 128 (LTAGLLAAIGAVHILTALLVL) and 165 to 185 (FWLGGCGGSVFAWLLVGTLHL).

Belongs to the PsaL family.

The protein resides in the cellular thylakoid membrane. The polypeptide is Photosystem I reaction center subunit XI (Prochlorococcus marinus (strain AS9601)).